The sequence spans 2350 residues: Probable JmjC domain-containing histone demethylation protein 2C (2350 aa).

Disordered stretches follow at residues T96–C302 and P314–H336. A compositionally biased stretch (polar residues) spans A98–I127. A phosphoserine mark is found at S135 and S138. The span at D141–K160 shows a compositional bias: basic and acidic residues. Residues G161–R171 are compositionally biased toward basic residues. Residues K172 to N189 show a composition bias toward basic and acidic residues. Over residues A190–E200 the composition is skewed to low complexity. Phosphoserine is present on residues S191 and S194. Residues Q257–T280 are compositionally biased toward basic and acidic residues. The span at L281–C302 shows a compositional bias: polar residues. Phosphoserine is present on residues S294 and S320. T324 carries the phosphothreonine modification. Phosphoserine occurs at positions 420, 436, 457, 458, 460, 471, and 762. 5 disordered regions span residues S426–A486, S747–T766, R859–V883, R1030–L1083, and E1422–S1508. Composition is skewed to low complexity over residues S863 to S874 and S1034 to P1045. Residues S1071–L1083 are compositionally biased toward polar residues. Over residues K1454–K1463 the composition is skewed to basic residues. Basic and acidic residues predominate over residues K1464–K1480. The segment at C1657–C1682 adopts a C6-type zinc-finger fold. The span at K1776–P1818 shows a compositional bias: polar residues. The tract at residues K1776 to S1874 is disordered. S1800 carries the phosphoserine modification. Positions A1826–D1849 are enriched in basic and acidic residues. The segment covering S1855–S1874 has biased composition (polar residues). An LXXLL motif motif is present at residues L1876 to L1880. The interval P1933–K1962 is disordered. A Glycyl lysine isopeptide (Lys-Gly) (interchain with G-Cter in SUMO2) cross-link involves residue K1942. One can recognise a JmjC domain in the interval M2084–R2308. Fe cation contacts are provided by H2146, E2148, and H2276.

The protein belongs to the JHDM2 histone demethylase family. Fe(2+) is required as a cofactor.

It localises to the nucleus. Its function is as follows. Probable histone demethylase that specifically demethylates 'Lys-9' of histone H3, thereby playing a central role in histone code. Demethylation of Lys residue generates formaldehyde and succinate. May be involved in hormone-dependent transcriptional activation, by participating in recruitment to androgen-receptor target genes. The sequence is that of Probable JmjC domain-containing histone demethylation protein 2C (Jmjd1c) from Mus musculus (Mouse).